Here is a 232-residue protein sequence, read N- to C-terminus: 7-cyano-7-deazaguanine synthase (232 aa).

Residue 8-18 (FSGGQDSTTCL) coordinates ATP. Residues cysteine 189, cysteine 198, cysteine 201, and cysteine 204 each coordinate Zn(2+).

Belongs to the QueC family. Zn(2+) is required as a cofactor.

The enzyme catalyses 7-carboxy-7-deazaguanine + NH4(+) + ATP = 7-cyano-7-deazaguanine + ADP + phosphate + H2O + H(+). The protein operates within purine metabolism; 7-cyano-7-deazaguanine biosynthesis. Functionally, catalyzes the ATP-dependent conversion of 7-carboxy-7-deazaguanine (CDG) to 7-cyano-7-deazaguanine (preQ(0)). The chain is 7-cyano-7-deazaguanine synthase from Proteus mirabilis (strain HI4320).